The primary structure comprises 310 residues: 4-hydroxyproline epimerase (310 aa).

Residue cysteine 88 is the Proton acceptor of the active site. Substrate-binding positions include 89-90 (GH), histidine 208, and aspartate 232. The active-site Proton donor is the cysteine 236. 237–238 (GT) is a substrate binding site.

The protein belongs to the proline racemase family. Homodimer.

It carries out the reaction trans-4-hydroxy-L-proline = cis-4-hydroxy-D-proline. Its function is as follows. Allows intracellular utilization of 4-hydroxyproline, one of the major constituents of host collagen, by converting 4-hydroxy-L-proline to 4-hydroxy-D-proline, which can be further metabolized by intracellular 4-hydroxy-D-proline oxidases. The protein is 4-hydroxyproline epimerase of Burkholderia cenocepacia (strain HI2424).